Consider the following 454-residue polypeptide: Glutamate--tRNA ligase (454 aa).

A 'HIGH' region motif is present at residues 7 to 17 (PSPTGCLHIGG). Zn(2+) contacts are provided by Cys96, Cys98, Cys123, and Asp125. The short motif at 230–234 (RLSKR) is the 'KMSKS' region element. Residue Lys233 coordinates ATP.

It belongs to the class-I aminoacyl-tRNA synthetase family. Glutamate--tRNA ligase type 1 subfamily. In terms of assembly, monomer. It depends on Zn(2+) as a cofactor.

It is found in the cytoplasm. The enzyme catalyses tRNA(Glu) + L-glutamate + ATP = L-glutamyl-tRNA(Glu) + AMP + diphosphate. Functionally, catalyzes the attachment of glutamate to tRNA(Glu) in a two-step reaction: glutamate is first activated by ATP to form Glu-AMP and then transferred to the acceptor end of tRNA(Glu). This Ruthia magnifica subsp. Calyptogena magnifica protein is Glutamate--tRNA ligase.